The sequence spans 337 residues: F420-dependent glucose-6-phosphate dehydrogenase (337 aa).

Aspartate 40 is a binding site for coenzyme F420-(gamma-Glu)n. Residue histidine 41 is the Proton donor of the active site. Residues threonine 77 and 108-109 (SG) contribute to the coenzyme F420-(gamma-Glu)n site. The active-site Proton acceptor is the glutamate 110. Coenzyme F420-(gamma-Glu)n-binding positions include asparagine 113, 178–179 (GG), and 181–182 (VV). Positions 196, 199, 260, and 284 each coordinate substrate.

The protein belongs to the F420-dependent glucose-6-phosphate dehydrogenase family. In terms of assembly, homodimer.

The catalysed reaction is oxidized coenzyme F420-(gamma-L-Glu)(n) + D-glucose 6-phosphate + H(+) = 6-phospho-D-glucono-1,5-lactone + reduced coenzyme F420-(gamma-L-Glu)(n). Its function is as follows. Catalyzes the coenzyme F420-dependent oxidation of glucose 6-phosphate (G6P) to 6-phosphogluconolactone. The protein is F420-dependent glucose-6-phosphate dehydrogenase of Rhodococcus erythropolis (strain PR4 / NBRC 100887).